Consider the following 338-residue polypeptide: Nicotinate-nucleotide--dimethylbenzimidazole phosphoribosyltransferase (338 aa).

The active-site Proton acceptor is the Glu-306.

It belongs to the CobT family.

The enzyme catalyses 5,6-dimethylbenzimidazole + nicotinate beta-D-ribonucleotide = alpha-ribazole 5'-phosphate + nicotinate + H(+). It functions in the pathway nucleoside biosynthesis; alpha-ribazole biosynthesis; alpha-ribazole from 5,6-dimethylbenzimidazole: step 1/2. In terms of biological role, catalyzes the synthesis of alpha-ribazole-5'-phosphate from nicotinate mononucleotide (NAMN) and 5,6-dimethylbenzimidazole (DMB). The sequence is that of Nicotinate-nucleotide--dimethylbenzimidazole phosphoribosyltransferase from Cereibacter sphaeroides (strain ATCC 17025 / ATH 2.4.3) (Rhodobacter sphaeroides).